The sequence spans 331 residues: Neuropeptides B/W receptor type 1 (331 aa).

Over 1 to 43 (MHNASYWGPERANTSCPAPAPTLGCPNASGPAPPLPPPLAVAV) the chain is Extracellular. N-linked (GlcNAc...) asparagine glycosylation is found at asparagine 3, asparagine 13, and asparagine 27. A helical transmembrane segment spans residues 44–66 (PVVYAVICAVGLAGNSAVLFVLL). Residues 67 to 75 (RAPRRKTVT) are Cytoplasmic-facing. Residues 76–100 (NLFILNLAVADELFTLVPPVNIADF) form a helical membrane-spanning segment. Topologically, residues 101–115 (LLRRWPFGELLCKLV) are extracellular. The cysteines at positions 112 and 191 are disulfide-linked. Residues 116-135 (VAVDQYNTFSSLYFLTVMSA) form a helical membrane-spanning segment. Over 136–160 (DRYLVVLATAESRRVAGRTYGAARA) the chain is Cytoplasmic. A helical transmembrane segment spans residues 161–180 (VSLAVWGVATLVVLPFAVFA). Over 181–205 (RLDEEQGRRQCVLVFPQPEALWWRA) the chain is Extracellular. The chain crosses the membrane as a helical span at residues 206-227 (SRLYTLVLGFAIPVSTICVLYT). The Cytoplasmic segment spans residues 228-251 (SLLCRLRAIRLDSHAKALDRAKKR). The chain crosses the membrane as a helical span at residues 252 to 276 (VTVLVVAILAVCLLVWTPYHLSTVV). Residues 277–286 (ALTTDLPQTP) are Extracellular-facing. The chain crosses the membrane as a helical span at residues 287–301 (LVIAVSYFITSLSYA). Over 302–331 (NSCLNPFLYAFLDDSFRRSLRQLLACRTTS) the chain is Cytoplasmic.

It belongs to the G-protein coupled receptor 1 family.

Its subcellular location is the cell membrane. Functionally, interacts specifically with a number of opioid ligands. Receptor for neuropeptides B and W, which may be involved in neuroendocrine system regulation, food intake and the organization of other signals. The protein is Neuropeptides B/W receptor type 1 (NPBWR1) of Bos taurus (Bovine).